Consider the following 638-residue polypeptide: Probable ATP-binding protein YheS (638 aa).

ABC transporter domains follow at residues 2–246 (IIFS…AQQT) and 313–531 (VMIE…STSE). Residues 34–41 (GKNGCGKS) and 349–356 (GKNGAGKS) contribute to the ATP site. Residues 525 to 563 (EQNSTSENKVSEKVGDNENSVQNRKEQKRREAELRQQTA) are disordered. Residues 547-558 (NRKEQKRREAEL) show a composition bias toward basic and acidic residues.

It belongs to the ABC transporter superfamily. ABCF family. YheS subfamily.

Genetic data indicate it may be involved in ribosome assembly or function. This is Probable ATP-binding protein YheS from Haemophilus influenzae (strain ATCC 51907 / DSM 11121 / KW20 / Rd).